A 254-amino-acid chain; its full sequence is Lipid uptake coordinator A (254 aa).

A run of 4 helical transmembrane segments spans residues 5-25, 44-64, 85-105, and 114-134; these read VAVL…FYFV, LRIA…FTLL, IMAH…EVWL, and LFGI…GFYL. Residues 143 to 254 form a disordered region; it reads PPPKPLKPKK…SGVQVAKVDE (112 aa). Positions 148–163 are enriched in basic residues; the sequence is LKPKKPKQRRLRRKKT. Residues 169 to 191 are compositionally biased toward acidic residues; that stretch reads AEPEAAEEAENTELAAQEDEEAV. Positions 192–220 are enriched in low complexity; sequence EAPPESIESPGGEPESATREAPAAETATA. Residues 227 to 244 are compositionally biased toward basic residues; sequence LRNRRPTGKTSHRRRRTR.

In terms of assembly, interacts with the Mce1 and Mce4 accessory subunits Rv0199/OmamA, Rv0177/Mam1C and Rv3492c/Mam4B.

The protein localises to the cell membrane. Required for the import of both fatty acids and cholesterol during growth in macrophages and in axenic culture. Facilitates the uptake of these lipids by stabilizing protein subunits of the Mce1 and Mce4 multi-subunit transporters, which transport fatty acids and cholesterol, respectively. Required for full virulence in vivo. This is Lipid uptake coordinator A from Mycobacterium tuberculosis (strain ATCC 25618 / H37Rv).